Consider the following 189-residue polypeptide: Ribosome-recycling factor (189 aa).

It belongs to the RRF family.

The protein localises to the cytoplasm. Functionally, responsible for the release of ribosomes from messenger RNA at the termination of protein biosynthesis. May increase the efficiency of translation by recycling ribosomes from one round of translation to another. The sequence is that of Ribosome-recycling factor from Salinibacter ruber (strain DSM 13855 / M31).